The chain runs to 620 residues: Preterminal protein (620 aa).

Residues 356–365 carry the Nuclear localization signal motif; it reads RLPMRRRRRR. Ser-545 bears the O-(5'-phospho-DNA)-serine mark.

The protein belongs to the adenoviridae terminal protein family. As to quaternary structure, heterodimer with the polymerase; this heterodimer binds to bp 9 to 18 of the genome. Interacts with host POU2F1; POU2F1 binds to the auxiliary sequences in the inverted terminal repeats and tethers the pTP-POL heterodimer to the origin DNA thereby participating in the assembly of the pre-initiation complex (POL-TP-DBP-NFIA-POU2F1). Post-translationally, preterminal protein is used to replicate viral genome, upon genomic encapsidation it is processed first into iTP and finally into TP by adenovirus protease.

It localises to the host nucleus matrix. Functionally, protein covalently bound to the viral DNA that acts as a primer for viral genomic replication by DNA strand displacement. Assembles on the viral origin of replication in an initiation complex with viral polymerase, DBP, host NFIA and host POU2F1/OCT1. During initiation, the polymerase covalently couples the first dCTP with Ser-580 of pTP. The terminal protein stimulates the template activity over 20 fold compared to protein-free templates. Neo-synthesized viral genomes are linked to two preterminal proteins, one for each 5' end. These new genomes are encapsidated in the nucleus, and during capsid maturation by viral protease, preterminal protein is first cleaved into intermediary (iTP), then into mature TP. May play a role in host nuclear matrix localization of genomic DNA. This chain is Preterminal protein, found in Bovine adenovirus 2 (BAdV-2).